We begin with the raw amino-acid sequence, 164 residues long: uncharacterized protein (164 aa).

This is an uncharacterized protein from Methanocaldococcus jannaschii (strain ATCC 43067 / DSM 2661 / JAL-1 / JCM 10045 / NBRC 100440) (Methanococcus jannaschii).